We begin with the raw amino-acid sequence, 118 residues long: uncharacterized protein (118 aa).

An N-terminal signal peptide occupies residues 1-27 (MPIKEPDVWALIWSWLQTNLSSSSAQS).

This is an uncharacterized protein from Haemophilus influenzae (strain ATCC 51907 / DSM 11121 / KW20 / Rd).